Consider the following 92-residue polypeptide: Small ribosomal subunit protein uS19c (92 aa).

It belongs to the universal ribosomal protein uS19 family.

The protein localises to the plastid. Its subcellular location is the chloroplast. Its function is as follows. Protein S19 forms a complex with S13 that binds strongly to the 16S ribosomal RNA. This is Small ribosomal subunit protein uS19c from Nasturtium officinale (Watercress).